The following is a 391-amino-acid chain: Alkanesulfonate monooxygenase (391 aa).

The protein belongs to the SsuD family.

The catalysed reaction is an alkanesulfonate + FMNH2 + O2 = an aldehyde + FMN + sulfite + H2O + 2 H(+). In terms of biological role, catalyzes the desulfonation of aliphatic sulfonates. The sequence is that of Alkanesulfonate monooxygenase from Rhodopseudomonas palustris (strain TIE-1).